We begin with the raw amino-acid sequence, 64 residues long: Copper-metallothionein (64 aa).

Serine 1 is subject to N-acetylserine. Cysteine 7, cysteine 11, cysteine 16, cysteine 18, cysteine 22, cysteine 24, cysteine 28, cysteine 30, cysteine 33, cysteine 36, cysteine 38, cysteine 43, cysteine 45, cysteine 49, cysteine 55, cysteine 57, cysteine 61, and cysteine 63 together coordinate Cu(+).

The protein belongs to the metallothionein superfamily. Type 2 family.

In terms of biological role, the metallothioneins are involved in the cellular sequestration of toxic metal ions and regulation of essential trace elements. This isoform binds exclusively copper. This Helix pomatia (Roman snail) protein is Copper-metallothionein.